A 334-amino-acid polypeptide reads, in one-letter code: Ferrochelatase (334 aa).

Fe cation is bound by residues H207 and E288.

It belongs to the ferrochelatase family.

The protein localises to the cytoplasm. The catalysed reaction is heme b + 2 H(+) = protoporphyrin IX + Fe(2+). It functions in the pathway porphyrin-containing compound metabolism; protoheme biosynthesis; protoheme from protoporphyrin-IX: step 1/1. In terms of biological role, catalyzes the ferrous insertion into protoporphyrin IX. In Helicobacter pylori (strain ATCC 700392 / 26695) (Campylobacter pylori), this protein is Ferrochelatase.